The chain runs to 102 residues: Monothiol glutaredoxin-S1 (102 aa).

Residues 1–101 (MEKISNLLED…SLLRRAGAIW (101 aa)) form the Glutaredoxin domain. Position 21 (Cys-21) interacts with [2Fe-2S] cluster.

The protein belongs to the glutaredoxin family. CC-type subfamily.

It is found in the cytoplasm. Functionally, may only reduce GSH-thiol disulfides, but not protein disulfides. The protein is Monothiol glutaredoxin-S1 (GRXS1) of Arabidopsis thaliana (Mouse-ear cress).